We begin with the raw amino-acid sequence, 656 residues long: Choline transporter-like protein 1 (656 aa).

Residue G2 is the site of N-myristoyl glycine attachment. Residues 2 to 29 are Cytoplasmic-facing; it reads GCCSSASAAQSSKREWKPLEDRSCTDIP. A helical transmembrane segment spans residues 30–50; it reads WLLLFVLFCIGMGFICGFSVA. The Extracellular portion of the chain corresponds to 51–211; the sequence is TGAAARLVSG…RLISGVMTSK (161 aa). N-linked (GlcNAc...) asparagine glycosylation is found at N134 and N179. A helical transmembrane segment spans residues 212 to 232; it reads EIILGLCLLSLVLSMILMVII. At 233-237 the chain is on the cytoplasmic side; the sequence is RYISR. Residues 238–258 form a helical membrane-spanning segment; sequence VLVWILTILVILGSLGGTGVL. At 259 to 287 the chain is on the extracellular side; that stretch reads WWLYAKQRRSPKETVIPEQLQIAEDNLRA. A helical transmembrane segment spans residues 288–308; sequence LLIYAISATVFTVILFLIMLV. The Cytoplasmic portion of the chain corresponds to 309–314; that stretch reads MRKRVA. Residues 315–335 traverse the membrane as a helical segment; sequence LTIALFHVAGKVFIHLPLLVF. At 336-337 the chain is on the extracellular side; that stretch reads QP. Residues 338-358 traverse the membrane as a helical segment; that stretch reads FWTFFALVLFWAYWIMTLLFL. The Cytoplasmic portion of the chain corresponds to 359-379; that stretch reads GTTGSAVQNEQGFVEYKISGP. A helical membrane pass occupies residues 380-400; it reads LQYMWWYHVVGLIWISEFILA. Residues 401–441 are Extracellular-facing; it reads CQQMTVAGAVVTYYFTRDKRNLPFTPILASVNRLIRYHLGT. A helical membrane pass occupies residues 442-462; that stretch reads VAKGSFIITLVKIPRMILMYI. The Cytoplasmic segment spans residues 463 to 536; it reads HSQLKGKENA…RVAAINTVGD (74 aa). The helical transmembrane segment at 537–557 threads the bilayer; sequence FMLFLGKVLIVCSTGLAGIML. At 558–565 the chain is on the extracellular side; sequence LNYQQDYT. A helical transmembrane segment spans residues 566–586; sequence VWVLPLIIVCLFAFLVAHCFL. At 587-656 the chain is on the cytoplasmic side; it reads SIYEMVVDVL…KPMASGASSA (70 aa). The interval 635–656 is disordered; sequence AGKGGAADARKLKPMASGASSA. Position 651 is a phosphoserine (S651).

It belongs to the CTL (choline transporter-like) family. As to expression, expressed in neurons, oligodendrocytes and astrocytes. Also expressed in the mucosal cell layer of the colon. In the developing brain, isoform 1 is expressed in both neurons and oligodendroglial cells, whereas isoform 2 is restricted to oligodendroglial cells.

It is found in the cell membrane. The protein localises to the mitochondrion outer membrane. It carries out the reaction choline(out) + n H(+)(in) = choline(in) + n H(+)(out). It catalyses the reaction ethanolamine(out) + n H(+)(in) = ethanolamine(in) + n H(+)(out). In terms of biological role, choline transporter, acts as a choline/H+ antiporter. Also acts as a high-affinity ethanolamine/H+ antiporter, regulating the supply of extracellular ethanolamine (Etn) for the CDP-Etn pathway, redistribute intracellular Etn and balance the CDP-Cho and CDP-Etn arms of the Kennedy pathway. Involved in membrane synthesis and myelin production. This Rattus norvegicus (Rat) protein is Choline transporter-like protein 1 (Slc44a1).